A 169-amino-acid chain; its full sequence is Shikimate kinase (169 aa).

13-18 (GAGKST) lines the ATP pocket. Ser-17 contacts Mg(2+). Substrate is bound by residues Asp-35, Arg-59, and Gly-80. Residue Arg-117 coordinates ATP. Arg-136 contributes to the substrate binding site. Position 153 (Arg-153) interacts with ATP.

The protein belongs to the shikimate kinase family. In terms of assembly, monomer. The cofactor is Mg(2+).

The protein resides in the cytoplasm. The catalysed reaction is shikimate + ATP = 3-phosphoshikimate + ADP + H(+). It functions in the pathway metabolic intermediate biosynthesis; chorismate biosynthesis; chorismate from D-erythrose 4-phosphate and phosphoenolpyruvate: step 5/7. Its function is as follows. Catalyzes the specific phosphorylation of the 3-hydroxyl group of shikimic acid using ATP as a cosubstrate. This is Shikimate kinase from Corynebacterium efficiens (strain DSM 44549 / YS-314 / AJ 12310 / JCM 11189 / NBRC 100395).